We begin with the raw amino-acid sequence, 253 residues long: Imidazole glycerol phosphate synthase subunit HisF (253 aa).

Catalysis depends on residues Asp-11 and Asp-130.

Belongs to the HisA/HisF family. In terms of assembly, heterodimer of HisH and HisF.

The protein resides in the cytoplasm. It catalyses the reaction 5-[(5-phospho-1-deoxy-D-ribulos-1-ylimino)methylamino]-1-(5-phospho-beta-D-ribosyl)imidazole-4-carboxamide + L-glutamine = D-erythro-1-(imidazol-4-yl)glycerol 3-phosphate + 5-amino-1-(5-phospho-beta-D-ribosyl)imidazole-4-carboxamide + L-glutamate + H(+). Its pathway is amino-acid biosynthesis; L-histidine biosynthesis; L-histidine from 5-phospho-alpha-D-ribose 1-diphosphate: step 5/9. In terms of biological role, IGPS catalyzes the conversion of PRFAR and glutamine to IGP, AICAR and glutamate. The HisF subunit catalyzes the cyclization activity that produces IGP and AICAR from PRFAR using the ammonia provided by the HisH subunit. In Geotalea uraniireducens (strain Rf4) (Geobacter uraniireducens), this protein is Imidazole glycerol phosphate synthase subunit HisF.